Here is a 523-residue protein sequence, read N- to C-terminus: GMP synthase [glutamine-hydrolyzing] (523 aa).

A Glutamine amidotransferase type-1 domain is found at 8–205 (KILILDFGSQ…VVGICGCECK (198 aa)). Catalysis depends on Cys85, which acts as the Nucleophile. Catalysis depends on residues His179 and Glu181. Positions 206–398 (WTAENIIEDA…LGLPAEMLNR (193 aa)) constitute a GMPS ATP-PPase domain. 233 to 239 (SGGVDSS) serves as a coordination point for ATP.

Homodimer.

The enzyme catalyses XMP + L-glutamine + ATP + H2O = GMP + L-glutamate + AMP + diphosphate + 2 H(+). Its pathway is purine metabolism; GMP biosynthesis; GMP from XMP (L-Gln route): step 1/1. In terms of biological role, catalyzes the synthesis of GMP from XMP. In Actinobacillus pleuropneumoniae serotype 3 (strain JL03), this protein is GMP synthase [glutamine-hydrolyzing].